Consider the following 212-residue polypeptide: 3-isopropylmalate dehydratase small subunit (212 aa).

This sequence belongs to the LeuD family. LeuD type 1 subfamily. As to quaternary structure, heterodimer of LeuC and LeuD.

It catalyses the reaction (2R,3S)-3-isopropylmalate = (2S)-2-isopropylmalate. The protein operates within amino-acid biosynthesis; L-leucine biosynthesis; L-leucine from 3-methyl-2-oxobutanoate: step 2/4. Its function is as follows. Catalyzes the isomerization between 2-isopropylmalate and 3-isopropylmalate, via the formation of 2-isopropylmaleate. This Pseudomonas aeruginosa (strain LESB58) protein is 3-isopropylmalate dehydratase small subunit.